The primary structure comprises 906 residues: Protein translocase subunit SecA (906 aa).

ATP is bound by residues Gln-87, Gly-105–Thr-109, and Asp-507. Cys-890, Cys-892, Cys-901, and His-902 together coordinate Zn(2+).

The protein belongs to the SecA family. Monomer and homodimer. Part of the essential Sec protein translocation apparatus which comprises SecA, SecYEG and auxiliary proteins SecDF-YajC and YidC. The cofactor is Zn(2+).

The protein resides in the cell inner membrane. Its subcellular location is the cytoplasm. It carries out the reaction ATP + H2O + cellular proteinSide 1 = ADP + phosphate + cellular proteinSide 2.. Part of the Sec protein translocase complex. Interacts with the SecYEG preprotein conducting channel. Has a central role in coupling the hydrolysis of ATP to the transfer of proteins into and across the cell membrane, serving both as a receptor for the preprotein-SecB complex and as an ATP-driven molecular motor driving the stepwise translocation of polypeptide chains across the membrane. The chain is Protein translocase subunit SecA from Laribacter hongkongensis (strain HLHK9).